Consider the following 251-residue polypeptide: Segregation and condensation protein A (251 aa).

The protein belongs to the ScpA family. In terms of assembly, component of a cohesin-like complex composed of ScpA, ScpB and the Smc homodimer, in which ScpA and ScpB bind to the head domain of Smc. The presence of the three proteins is required for the association of the complex with DNA.

It is found in the cytoplasm. Functionally, participates in chromosomal partition during cell division. May act via the formation of a condensin-like complex containing Smc and ScpB that pull DNA away from mid-cell into both cell halves. This Bacillus velezensis (strain DSM 23117 / BGSC 10A6 / LMG 26770 / FZB42) (Bacillus amyloliquefaciens subsp. plantarum) protein is Segregation and condensation protein A.